A 71-amino-acid polypeptide reads, in one-letter code: Exodeoxyribonuclease 7 small subunit (71 aa).

It belongs to the XseB family. In terms of assembly, heterooligomer composed of large and small subunits.

It localises to the cytoplasm. The catalysed reaction is Exonucleolytic cleavage in either 5'- to 3'- or 3'- to 5'-direction to yield nucleoside 5'-phosphates.. Functionally, bidirectionally degrades single-stranded DNA into large acid-insoluble oligonucleotides, which are then degraded further into small acid-soluble oligonucleotides. This chain is Exodeoxyribonuclease 7 small subunit, found in Streptococcus equi subsp. zooepidemicus (strain H70).